The sequence spans 196 residues: Protein LIGHT-DEPENDENT SHORT HYPOCOTYLS 6 (196 aa).

Over residues 1–16 (MESADSGRSDPVKGDD) the composition is skewed to basic and acidic residues. Disordered regions lie at residues 1–36 (MESA…ESQK) and 149–196 (ARGI…AVPP). Positions 31 to 158 (RYESQKRRDW…ARGIPYEKKK (128 aa)) constitute an ALOG domain. The Nuclear localization signal motif lies at 156 to 160 (KKKRK).

This sequence belongs to the plant homeotic and developmental regulators ALOG protein family.

Its subcellular location is the nucleus. In terms of biological role, probable transcription regulator that acts as a developmental regulator by promoting cell growth in response to light. The polypeptide is Protein LIGHT-DEPENDENT SHORT HYPOCOTYLS 6 (LSH6) (Arabidopsis thaliana (Mouse-ear cress)).